Consider the following 181-residue polypeptide: Probable cobalt-precorrin-6B C(15)-methyltransferase (decarboxylating) (181 aa).

S-adenosyl-L-methionine contacts are provided by residues T16, 40-44 (GCGSG), D61, and A89.

It belongs to the methyltransferase superfamily. Archaeal-type CbiT family.

It catalyses the reaction Co-precorrin-6B + S-adenosyl-L-methionine = Co-precorrin-7 + S-adenosyl-L-homocysteine + CO2. It participates in cofactor biosynthesis; adenosylcobalamin biosynthesis; cob(II)yrinate a,c-diamide from sirohydrochlorin (anaerobic route): step 8/10. In terms of biological role, catalyzes the methylation of C-15 in cobalt-precorrin-6B followed by the decarboxylation of C-12 to form cobalt-precorrin-7. This chain is Probable cobalt-precorrin-6B C(15)-methyltransferase (decarboxylating), found in Methanococcus maripaludis (strain C5 / ATCC BAA-1333).